The primary structure comprises 293 residues: Protein PET54 (293 aa).

The protein resides in the mitochondrion inner membrane. In terms of biological role, activator of specific mitochondrial mRNAs. PET54 is involved in the excision of intron aI5-beta from pre-mRNA for cytochrome c oxidase I (COX1) and plays a role in promoting the translation of COX3. The polypeptide is Protein PET54 (PET54) (Saccharomyces cerevisiae (strain ATCC 204508 / S288c) (Baker's yeast)).